Here is a 736-residue protein sequence, read N- to C-terminus: Catalase-peroxidase (736 aa).

Residues 96–224 constitute a cross-link (tryptophyl-tyrosyl-methioninium (Trp-Tyr) (with M-250)); that stretch reads WHSAGTYRTG…LAAVQMGLIY (129 aa). His97 serves as the catalytic Proton acceptor. Positions 224-250 form a cross-link, tryptophyl-tyrosyl-methioninium (Tyr-Met) (with W-96); sequence YVNPEGPDGNPDPVASGRDVRETFGRM. Residue His265 participates in heme b binding.

Belongs to the peroxidase family. Peroxidase/catalase subfamily. In terms of assembly, homodimer or homotetramer. It depends on heme b as a cofactor. Formation of the three residue Trp-Tyr-Met cross-link is important for the catalase, but not the peroxidase activity of the enzyme.

It catalyses the reaction H2O2 + AH2 = A + 2 H2O. The catalysed reaction is 2 H2O2 = O2 + 2 H2O. Its function is as follows. Bifunctional enzyme with both catalase and broad-spectrum peroxidase activity. In Pelobacter propionicus (strain DSM 2379 / NBRC 103807 / OttBd1), this protein is Catalase-peroxidase.